The following is a 651-amino-acid chain: Receptor-like serine/threonine-protein kinase At4g25390 (651 aa).

The signal sequence occupies residues 1–25 (MPSRSISAPVPVLAPAPIVSSLVPA). Topologically, residues 26 to 40 (APSGHQNKTTRIFPP) are extracellular. An N-linked (GlcNAc...) asparagine glycan is attached at asparagine 32. The helical transmembrane segment at 41–61 (FVVAGAGAGFSLFITLSVCFC) threads the bilayer. The Cytoplasmic portion of the chain corresponds to 62–651 (KFSRKRSSPP…PLKTTRKQRR (590 aa)). The interval 66–87 (KRSSPPAENASSSPRRPSPREF) is disordered. Low complexity predominate over residues 69–87 (SPPAENASSSPRRPSPREF). Positions 99-633 (FSQANRLGQG…LKGEVNLPEL (535 aa)) constitute a Protein kinase domain. ATP-binding positions include 105 to 113 (LGQGGFGVV) and lysine 127. Aspartate 225 functions as the Proton acceptor in the catalytic mechanism.

It belongs to the protein kinase superfamily. Ser/Thr protein kinase family.

It is found in the cell membrane. The enzyme catalyses L-seryl-[protein] + ATP = O-phospho-L-seryl-[protein] + ADP + H(+). The catalysed reaction is L-threonyl-[protein] + ATP = O-phospho-L-threonyl-[protein] + ADP + H(+). In Arabidopsis thaliana (Mouse-ear cress), this protein is Receptor-like serine/threonine-protein kinase At4g25390.